The following is an 805-amino-acid chain: Phosphoinositide 3-kinase adapter protein 1 (805 aa).

The region spanning 8–145 is the TIR domain; the sequence is RGCDILIVYS…AVKKAISEDS (138 aa). A necessary and sufficient to mediate inhibition of NF-kappa-B downstream of activated TLRs; may mediate interaction with MYD88 and TIRAP region spans residues 10-144; that stretch reads CDILIVYSPD…AAVKKAISED (135 aa). The tract at residues 145-165 is disordered; that stretch reads SGCDSVTDTEPEDEKVVSYSK. Positions 181-317 constitute a DBB domain; it reads VQPDRIRCGA…NIPASGLHLF (137 aa). Y263 is subject to Phosphotyrosine. Y419, Y444, and Y459 each carry phosphotyrosine; by SYK. Position 513 is a phosphotyrosine; by ABL1 (Y513). Positions 527-547 are disordered; the sequence is ASRPPVPVPRPETTAPGAHQL. Y553 and Y570 each carry phosphotyrosine; by ABL1. The interval 571-590 is disordered; it reads VSSESIRKGPPVRPWRDRPQ. A Phosphotyrosine; by ABL1 modification is found at Y594. At S642 the chain carries Phosphoserine. Residues 645-667 adopt a coiled-coil conformation; that stretch reads FQQENLKRLRDSITRRQREKQKS. Over residues 654–672 the composition is skewed to basic and acidic residues; sequence RDSITRRQREKQKSGKQTD. Residues 654–679 form a disordered region; it reads RDSITRRQREKQKSGKQTDLEITVPI. Phosphotyrosine; by ABL1 is present on Y694. The interval 697–805 is disordered; it reads GPRKSVIPPR…PPPPVPPRGR (109 aa). Residues 707–716 are compositionally biased toward basic and acidic residues; that stretch reads TELRRGDWKT. Residues 717-740 are compositionally biased toward low complexity; that stretch reads DSTSSTASSTSNRSSTRSLLSVSS. S718 is subject to Phosphoserine. Positions 795 to 805 are enriched in pro residues; that stretch reads HPPPPVPPRGR.

In terms of assembly, homooligomer. Interacts (phosphorylated on tyrosine residues within YXXM motifs) with PIK3R1 (via SH2 domain); required for BCR- and TLR-mediated activation of phosphoinositide 3-kinase. Interacts (via polyproline C-terminal region) with ABI1 (via SH3 domain); the interaction promotes phosphorylation of PIK3AP1 by ABL1. May interact with MYD88 and TIRAP. In terms of processing, constitutively phosphorylated. Phosphorylated on tyrosine residues in C-terminal region by ABL1. Phosphorylated on tyrosine residues within the YXXM motifs by BTK and SYK. Isoform 1 and isoform 2 are phosphorylated on tyrosine residues, most likely within the YXXM motifs, via CD19 activation. Toll-like receptor activation induces appearance of a phosphorylated form associated with membranes. As to expression, expressed in natural killer (NK) cells.

It is found in the cytoplasm. Its subcellular location is the cell membrane. Its function is as follows. Signaling adapter that contributes to B-cell development by linking B-cell receptor (BCR) signaling to the phosphoinositide 3-kinase (PI3K)-Akt signaling pathway. Has a complementary role to the BCR coreceptor CD19, coupling BCR and PI3K activation by providing a docking site for the PI3K subunit PIK3R1. Alternatively, links Toll-like receptor (TLR) signaling to PI3K activation, a process preventing excessive inflammatory cytokine production. Also involved in the activation of PI3K in natural killer cells. May be involved in the survival of mature B-cells via activation of REL. The polypeptide is Phosphoinositide 3-kinase adapter protein 1 (PIK3AP1) (Homo sapiens (Human)).